A 204-amino-acid polypeptide reads, in one-letter code: Urease accessory protein UreG (204 aa).

15-22 (GPVGSGKT) provides a ligand contact to GTP.

This sequence belongs to the SIMIBI class G3E GTPase family. UreG subfamily. As to quaternary structure, homodimer. UreD, UreF and UreG form a complex that acts as a GTP-hydrolysis-dependent molecular chaperone, activating the urease apoprotein by helping to assemble the nickel containing metallocenter of UreC. The UreE protein probably delivers the nickel.

The protein resides in the cytoplasm. Functionally, facilitates the functional incorporation of the urease nickel metallocenter. This process requires GTP hydrolysis, probably effectuated by UreG. In Methylobacterium sp. (strain 4-46), this protein is Urease accessory protein UreG.